The following is a 161-amino-acid chain: Deoxyuridine 5'-triphosphate nucleotidohydrolase (161 aa).

Substrate contacts are provided by residues 80-82 (RSG), asparagine 93, 97-99 (TVD), and lysine 107.

Belongs to the dUTPase family. Mg(2+) serves as cofactor.

The catalysed reaction is dUTP + H2O = dUMP + diphosphate + H(+). The protein operates within pyrimidine metabolism; dUMP biosynthesis; dUMP from dCTP (dUTP route): step 2/2. In terms of biological role, this enzyme is involved in nucleotide metabolism: it produces dUMP, the immediate precursor of thymidine nucleotides and it decreases the intracellular concentration of dUTP so that uracil cannot be incorporated into DNA. The polypeptide is Deoxyuridine 5'-triphosphate nucleotidohydrolase (Mesorhizobium japonicum (strain LMG 29417 / CECT 9101 / MAFF 303099) (Mesorhizobium loti (strain MAFF 303099))).